Consider the following 24-residue polypeptide: Retinol-binding protein 3 (24 aa).

The protein localises to the secreted. The protein resides in the extracellular space. It is found in the extracellular matrix. Its subcellular location is the interphotoreceptor matrix. Its function is as follows. IRBP shuttles 11-cis and all trans retinoids between the retinol isomerase in the pigment epithelium and the visual pigments in the photoreceptor cells of the retina. The polypeptide is Retinol-binding protein 3 (RBP3) (Ovis aries (Sheep)).